A 319-amino-acid chain; its full sequence is MKIELSVQPWDPGYSSEGATAQETYTCPKMIEIEQAEAQLSELDLLASMFPGENELIVNDQLAVAELKDCIEKKTMEGRSSKVYFTINMNLDVSEEKMAMFSLACILPFKYPAVLPEITVRSALLSRSQQTQLNTDLTAFLQKHCHGDVCILNATEWVREHASGYVSRDTSSSPTTGNTVQSVDLIFTRLWIYSHHIYNKCKRKNILEWAKELSLSGFSMPGKPGVVCVEGPQSACEEFWSRLRKLNWKRILIRHQEDIPFDGTNDEMERQRKFSIFEEKVFIVNGARGNHMDFGQLYQFLNTKGCGDVFQMFFGVEGQ.

One can recognise an RWD domain in the interval 41–165 (SELDLLASMF…EWVREHASGY (125 aa)). Serine 275 is subject to Phosphoserine.

The protein is RWD domain-containing protein 2B (RWDD2B) of Pongo abelii (Sumatran orangutan).